We begin with the raw amino-acid sequence, 994 residues long: Regulator of telomere elongation helicase 1 homolog (994 aa).

A Helicase ATP-binding domain is found at 7 to 316; the sequence is AGIPVHFPFE…DDLMLLKEML (310 aa). 42–49 lines the ATP pocket; it reads SPTGTGKT. [4Fe-4S] cluster-binding residues include Cys146, Cys164, Cys173, and Cys209. The short motif at 252–255 is the DEAH box element; it reads DEAH. Residues 861–887 are disordered; sequence SSGLVKIHKRERSSPPGSSQSSSQTAK. Residues 874 to 884 are compositionally biased toward low complexity; it reads SPPGSSQSSSQ.

This sequence belongs to the helicase family. RAD3/XPD subfamily.

The protein localises to the nucleus. The enzyme catalyses ATP + H2O = ADP + phosphate + H(+). Its function is as follows. A probable ATP-dependent DNA helicase implicated in DNA repair and the maintenance of genomic stability. Acts as an anti-recombinase to counteract toxic recombination and limit crossover during meiosis. Regulates meiotic recombination and crossover homeostasis by physically dissociating strand invasion events and thereby promotes noncrossover repair by meiotic synthesis dependent strand annealing (SDSA) as well as disassembly of D loop recombination intermediates. This chain is Regulator of telomere elongation helicase 1 homolog, found in Drosophila ananassae (Fruit fly).